The chain runs to 221 residues: Abscisic acid receptor PYL1 (221 aa).

Positions 1-11 are enriched in low complexity; sequence MANSESSSSPV. Positions 1 to 22 are disordered; sequence MANSESSSSPVNEEENSQRIST. Ala2 carries the N-acetylalanine modification. The interval 50-206 is START-like; it reads YQLGNGRCSS…NLQKLASITE (157 aa). Residues Lys86, 116 to 121, 143 to 149, and Glu171 each bind abscisate; these read ANTSRE and RLRNYKS. The Gate loop signature appears at 112-116; that stretch reads SGLPA. Residues 142–144 carry the Latch loop motif; the sequence is HRL.

Belongs to the PYR/PYL/RCAR abscisic acid intracellular receptor family. Homodimer. Binds ABA on one subunit only. Interacts with HAB1, ABI1 and ABI2, and possibly with other PP2Cs. Binds to CARs protein in an ABA-independent manner, both at the plasma membrane and in the nucleus. Interacts directly with CAR1 and CAR4.

The protein localises to the cytoplasm. The protein resides in the nucleus. It localises to the cell membrane. Its function is as follows. Receptor for abscisic acid (ABA) required for ABA-mediated responses such as stomatal closure and germination inhibition. Inhibits the activity of group-A protein phosphatases type 2C (PP2Cs) when activated by ABA. Can be activated by both (-)-ABA and (+)-ABA. This Arabidopsis thaliana (Mouse-ear cress) protein is Abscisic acid receptor PYL1 (PYL1).